The chain runs to 263 residues: Pimeloyl-[acyl-carrier protein] methyl ester esterase (263 aa).

Substrate-binding positions include Trp-23, 90 to 91 (SL), and 152 to 156 (FLTLQ). Residue Ser-90 is the Nucleophile of the active site. Catalysis depends on residues Asp-216 and His-244. His-244 contacts substrate.

The protein belongs to the AB hydrolase superfamily. Carboxylesterase BioH family. As to quaternary structure, monomer.

It is found in the cytoplasm. The catalysed reaction is 6-carboxyhexanoyl-[ACP] methyl ester + H2O = 6-carboxyhexanoyl-[ACP] + methanol + H(+). Its pathway is cofactor biosynthesis; biotin biosynthesis. The physiological role of BioH is to remove the methyl group introduced by BioC when the pimeloyl moiety is complete. It allows to synthesize pimeloyl-ACP via the fatty acid synthetic pathway through the hydrolysis of the ester bonds of pimeloyl-ACP esters. This Nitrosospira multiformis (strain ATCC 25196 / NCIMB 11849 / C 71) protein is Pimeloyl-[acyl-carrier protein] methyl ester esterase.